The sequence spans 76 residues: UPF0346 protein LBUL_1194 (76 aa).

Belongs to the UPF0346 family.

The polypeptide is UPF0346 protein LBUL_1194 (Lactobacillus delbrueckii subsp. bulgaricus (strain ATCC BAA-365 / Lb-18)).